We begin with the raw amino-acid sequence, 691 residues long: MPRTHAIEDYRNFGIMAHIDAGKTTTTERILYYTGKSHKIGEVHEGAATMDWMEQEQERGITITSAATTCFWRDKRLNIIDTPGHVDFTIEVERSLRVLDGAVCVLDGNQGVEPQTETVWRQADKYDVPRVVFVNKMDKIGADFFKCVADIIGRVAGKPVCLQLPIGAESSFKGVIDLIKMKAIVWSGEALGANFAEEEIPAELKDQAVEYRTKLVEACVELDDDAMTAYLDGVEPDEDGLRRLVRRAVQLRAFHPVLCGSAFKNKGVQPLLDAVVDYLPSPVDRGAVDGLDFKTEEPVKREPTDEDPFSMLAFKIMDDPHVGTITFCRVYSGKVESGTSVLNSSRDKKERVGRMLLMHANNREDIKEAYAGDIVALAGLKDTRTGDTLCDANKAVILEKMEFPEPVIEIAVEPKSKADQEKLGIALSKLAAEDPSFRVSTDQESGQTILKGMGELHLDIKVDILRRTYKVDANIGQPQVAYREKLTRRQEIDYTHKKQTGGTGQFARVKFVVEPNEPGAGFSFESKIVGGAVPKEYIPGVEKGLNSVLGAGVLAGFPVVDVKVELVDGAYHDVDSSALAFEIASRAAFREALQKGGSVLLEPVMKVEVVSPEEYTGSVIGDLNSRRGQIQGQDMRGNANVINAMVPLANMFGYVNQLRSFSQGRANFTMQFDHYEEVPRGEADKVIAKYA.

The tr-type G domain occupies E8–V283. Residues A17–T24, D81–H85, and N135–D138 each bind GTP.

This sequence belongs to the TRAFAC class translation factor GTPase superfamily. Classic translation factor GTPase family. EF-G/EF-2 subfamily.

The protein resides in the cytoplasm. Catalyzes the GTP-dependent ribosomal translocation step during translation elongation. During this step, the ribosome changes from the pre-translocational (PRE) to the post-translocational (POST) state as the newly formed A-site-bound peptidyl-tRNA and P-site-bound deacylated tRNA move to the P and E sites, respectively. Catalyzes the coordinated movement of the two tRNA molecules, the mRNA and conformational changes in the ribosome. This Methylorubrum populi (strain ATCC BAA-705 / NCIMB 13946 / BJ001) (Methylobacterium populi) protein is Elongation factor G.